Reading from the N-terminus, the 476-residue chain is Eukaryotic translation initiation factor 3 subunit L (476 aa).

Positions 257 to 452 (DAIRMFSHIL…DLDYALENDL (196 aa)) constitute a PCI domain.

It belongs to the eIF-3 subunit L family. Component of the eukaryotic translation initiation factor 3 (eIF-3) complex.

It is found in the cytoplasm. In terms of biological role, component of the eukaryotic translation initiation factor 3 (eIF-3) complex, which is involved in protein synthesis of a specialized repertoire of mRNAs and, together with other initiation factors, stimulates binding of mRNA and methionyl-tRNAi to the 40S ribosome. The eIF-3 complex specifically targets and initiates translation of a subset of mRNAs involved in cell proliferation. The polypeptide is Eukaryotic translation initiation factor 3 subunit L (Aspergillus fumigatus (strain CBS 144.89 / FGSC A1163 / CEA10) (Neosartorya fumigata)).